A 121-amino-acid chain; its full sequence is Basic phospholipase A2 daboxin P (121 aa).

7 disulfides stabilise this stretch: cysteine 26–cysteine 115, cysteine 28–cysteine 44, cysteine 43–cysteine 95, cysteine 49–cysteine 121, cysteine 50–cysteine 88, cysteine 57–cysteine 81, and cysteine 75–cysteine 86. Residues tyrosine 27, glycine 29, and glycine 31 each contribute to the Ca(2+) site. The active site involves histidine 47. Aspartate 48 is a Ca(2+) binding site. Aspartate 89 is an active-site residue.

It depends on Ca(2+) as a cofactor. Expressed by the venom gland.

Its subcellular location is the secreted. It catalyses the reaction a 1,2-diacyl-sn-glycero-3-phosphocholine + H2O = a 1-acyl-sn-glycero-3-phosphocholine + a fatty acid + H(+). In terms of biological role, snake venom phospholipase A2 (PLA2) that exhibits anticoagulant activity, probably by binding to factor X and its activated form factor Xa (F10). Shows no cytotoxicity. PLA2 catalyzes the calcium-dependent hydrolysis of the 2-acyl groups in 3-sn-phosphoglycerides. The polypeptide is Basic phospholipase A2 daboxin P (Daboia russelii (Russel's viper)).